The chain runs to 161 residues: Nucleotide-binding protein Nmul_A1044 (161 aa).

It belongs to the YajQ family.

Its function is as follows. Nucleotide-binding protein. The polypeptide is Nucleotide-binding protein Nmul_A1044 (Nitrosospira multiformis (strain ATCC 25196 / NCIMB 11849 / C 71)).